Reading from the N-terminus, the 957-residue chain is ERC protein 2 (957 aa).

Over residues 1–13 the composition is skewed to polar residues; sequence MYGSARTISNLEG. Residues 1 to 44 are disordered; it reads MYGSARTISNLEGSPSRSPRLPRSPRLGHRRTSSGGGGGTGKTL. Residues 14–25 show a composition bias toward low complexity; that stretch reads SPSRSPRLPRSP. 2 positions are modified to phosphoserine: serine 65 and serine 666. Residues 140 to 917 are a coiled coil; sequence RQVRDSTMLD…RMKLMADNYD (778 aa). The segment covering 922 to 943 has biased composition (basic residues); sequence HYHHHHHHHHHRSPGRSQHSNH. The disordered stretch occupies residues 922–957; it reads HYHHHHHHHHHRSPGRSQHSNHRPSPDQDDEEGIWA. Acidic residues predominate over residues 948-957; it reads DQDDEEGIWA.

Interacts with BSN, ERC1, PPFIA1, PPFIA2, PPFIA3 and PPFIA4. Interacts through its C-terminus with the PDZ domain of RIMS1. Part of a complex consisting of ERC2, RIMS1 and UNC13A. As to expression, expressed throughout the central nervous system, including hippocampus, cortex, cerebellum and olfactory bulb.

The protein localises to the cytoplasm. The protein resides in the synapse. It is found in the presynaptic active zone. Its subcellular location is the cytoskeleton. Functionally, thought to be involved in the organization of the cytomatrix at the nerve terminals active zone (CAZ) which regulates neurotransmitter release. Seems to act together with BSN. May recruit liprin-alpha proteins to the CAZ. In Mus musculus (Mouse), this protein is ERC protein 2 (Erc2).